The primary structure comprises 73 residues: Beta-defensin 108B (73 aa).

A signal peptide spans 1 to 22 (MRIAVLLFAIFFFMSQVLPARG). Intrachain disulfides connect Cys28–Cys55, Cys35–Cys49, and Cys39–Cys56.

Belongs to the beta-defensin family. Specifically expressed in testis. Low expression is detected also in liver.

It is found in the secreted. Has antibacterial activity. The protein is Beta-defensin 108B (DEFB108B) of Homo sapiens (Human).